Here is a 940-residue protein sequence, read N- to C-terminus: Isoleucine--tRNA ligase (940 aa).

Positions proline 58–histidine 68 match the 'HIGH' region motif. Glutamate 564 contacts L-isoleucyl-5'-AMP. Residues lysine 605–serine 609 carry the 'KMSKS' region motif. Lysine 608 is an ATP binding site. Residues cysteine 903, cysteine 906, cysteine 923, and cysteine 926 each coordinate Zn(2+).

This sequence belongs to the class-I aminoacyl-tRNA synthetase family. IleS type 1 subfamily. In terms of assembly, monomer. The cofactor is Zn(2+).

The protein resides in the cytoplasm. It catalyses the reaction tRNA(Ile) + L-isoleucine + ATP = L-isoleucyl-tRNA(Ile) + AMP + diphosphate. In terms of biological role, catalyzes the attachment of isoleucine to tRNA(Ile). As IleRS can inadvertently accommodate and process structurally similar amino acids such as valine, to avoid such errors it has two additional distinct tRNA(Ile)-dependent editing activities. One activity is designated as 'pretransfer' editing and involves the hydrolysis of activated Val-AMP. The other activity is designated 'posttransfer' editing and involves deacylation of mischarged Val-tRNA(Ile). This chain is Isoleucine--tRNA ligase, found in Shewanella woodyi (strain ATCC 51908 / MS32).